We begin with the raw amino-acid sequence, 51 residues long: Large ribosomal subunit protein eL39 (51 aa).

The segment at 1 to 22 (MAAQKSFRIKQKMAKAKKQNRP) is disordered. The segment covering 7–20 (FRIKQKMAKAKKQN) has biased composition (basic residues).

Belongs to the eukaryotic ribosomal protein eL39 family. As to quaternary structure, component of the large ribosomal subunit (LSU). Mature yeast ribosomes consist of a small (40S) and a large (60S) subunit. The 40S small subunit contains 1 molecule of ribosomal RNA (18S rRNA) and 33 different proteins (encoded by 57 genes). The large 60S subunit contains 3 rRNA molecules (25S, 5.8S and 5S rRNA) and 46 different proteins (encoded by 81 genes). eL39 interacts with YIH1.

The protein resides in the cytoplasm. In terms of biological role, component of the ribosome, a large ribonucleoprotein complex responsible for the synthesis of proteins in the cell. The small ribosomal subunit (SSU) binds messenger RNAs (mRNAs) and translates the encoded message by selecting cognate aminoacyl-transfer RNA (tRNA) molecules. The large subunit (LSU) contains the ribosomal catalytic site termed the peptidyl transferase center (PTC), which catalyzes the formation of peptide bonds, thereby polymerizing the amino acids delivered by tRNAs into a polypeptide chain. The nascent polypeptides leave the ribosome through a tunnel in the LSU and interact with protein factors that function in enzymatic processing, targeting, and the membrane insertion of nascent chains at the exit of the ribosomal tunnel. The sequence is that of Large ribosomal subunit protein eL39 from Saccharomyces cerevisiae (strain ATCC 204508 / S288c) (Baker's yeast).